A 472-amino-acid polypeptide reads, in one-letter code: NADH-quinone oxidoreductase subunit N (472 aa).

The next 14 helical transmembrane spans lie at 5–25, 36–56, 77–97, 103–123, 126–146, 158–178, 197–217, 229–249, 264–284, 292–309, 319–339, 363–383, 396–416, and 441–461; these read LLTT…IGLL, AYAA…QYGI, IFLV…DGLP, FYAL…ANDL, LYVG…YILG, LLLG…LYGL, LAIA…AVPF, PTPV…AVLV, WLTV…VVAI, MLAY…VGLM, ILFY…VATA, ASVM…AGFV, GVLW…YYYL, and LTVI…GPLA.

This sequence belongs to the complex I subunit 2 family. In terms of assembly, NDH-1 is composed of 14 different subunits. Subunits NuoA, H, J, K, L, M, N constitute the membrane sector of the complex.

It is found in the cell membrane. The enzyme catalyses a quinone + NADH + 5 H(+)(in) = a quinol + NAD(+) + 4 H(+)(out). Functionally, NDH-1 shuttles electrons from NADH, via FMN and iron-sulfur (Fe-S) centers, to quinones in the respiratory chain. The immediate electron acceptor for the enzyme in this species is believed to be a menaquinone. Couples the redox reaction to proton translocation (for every two electrons transferred, four hydrogen ions are translocated across the cytoplasmic membrane), and thus conserves the redox energy in a proton gradient. The protein is NADH-quinone oxidoreductase subunit N of Heliobacterium modesticaldum (strain ATCC 51547 / Ice1).